A 1107-amino-acid polypeptide reads, in one-letter code: DNA-directed RNA polymerase subunit beta (1107 aa).

Positions 1062 to 1075 are enriched in basic and acidic residues; that stretch reads DNEGNEKEKARELG. The segment at 1062–1081 is disordered; sequence DNEGNEKEKARELGLDLPDN.

It belongs to the RNA polymerase beta chain family. The RNAP catalytic core consists of 2 alpha, 1 beta, 1 beta' and 1 omega subunit. When a sigma factor is associated with the core the holoenzyme is formed, which can initiate transcription.

It carries out the reaction RNA(n) + a ribonucleoside 5'-triphosphate = RNA(n+1) + diphosphate. DNA-dependent RNA polymerase catalyzes the transcription of DNA into RNA using the four ribonucleoside triphosphates as substrates. The chain is DNA-directed RNA polymerase subunit beta from Syntrophomonas wolfei subsp. wolfei (strain DSM 2245B / Goettingen).